The chain runs to 364 residues: DNA polymerase IV (364 aa).

The UmuC domain occupies 14 to 198 (IIHIDMDAFF…LPVEKFHGVG (185 aa)). Positions 18 and 116 each coordinate Mg(2+). Glu-117 is an active-site residue.

This sequence belongs to the DNA polymerase type-Y family. As to quaternary structure, monomer. The cofactor is Mg(2+).

The protein resides in the cytoplasm. The enzyme catalyses DNA(n) + a 2'-deoxyribonucleoside 5'-triphosphate = DNA(n+1) + diphosphate. Its function is as follows. Poorly processive, error-prone DNA polymerase involved in untargeted mutagenesis. Copies undamaged DNA at stalled replication forks, which arise in vivo from mismatched or misaligned primer ends. These misaligned primers can be extended by PolIV. Exhibits no 3'-5' exonuclease (proofreading) activity. May be involved in translesional synthesis, in conjunction with the beta clamp from PolIII. The sequence is that of DNA polymerase IV from Lactococcus lactis subsp. cremoris (strain SK11).